The following is a 544-amino-acid chain: Chaperonin GroEL 3 (544 aa).

ATP is bound by residues 30 to 33, Lys-51, 87 to 91, Gly-415, and Asp-496; these read TLGP and DGTTT.

The protein belongs to the chaperonin (HSP60) family. In terms of assembly, forms a cylinder of 14 subunits composed of two heptameric rings stacked back-to-back. Interacts with the co-chaperonin GroES.

It localises to the cytoplasm. It catalyses the reaction ATP + H2O + a folded polypeptide = ADP + phosphate + an unfolded polypeptide.. Functionally, together with its co-chaperonin GroES, plays an essential role in assisting protein folding. The GroEL-GroES system forms a nano-cage that allows encapsulation of the non-native substrate proteins and provides a physical environment optimized to promote and accelerate protein folding. This Rhizobium etli (strain ATCC 51251 / DSM 11541 / JCM 21823 / NBRC 15573 / CFN 42) protein is Chaperonin GroEL 3.